A 385-amino-acid chain; its full sequence is Putative mitochondrial carrier protein TRV_02148.2 (385 aa).

Solcar repeat units lie at residues 24-124 and 130-210; these read SNTL…LHAR and RTAG…LRRR. The next 5 helical transmembrane spans lie at 30–47, 132–150, 184–207, 263–279, and 294–310; these read GTAI…DSIL, AGNE…KLFT, WSAY…YLAL, YTIC…LEVI, and VVTV…LYML.

The protein belongs to the mitochondrial carrier (TC 2.A.29) family.

Its subcellular location is the mitochondrion inner membrane. In terms of biological role, may function as a mitochondrial transporter. The protein is Putative mitochondrial carrier protein TRV_02148.2 of Trichophyton verrucosum (strain HKI 0517).